The chain runs to 178 residues: UPF0114 protein in repA1-repA2 intergenic region (178 aa).

Helical transmembrane passes span 14–34, 53–73, and 136–156; these read WLIFPIYLGLSFCLILLTLKF, LILVILSLIDIVLVGGLLVMV, and WYVIIHLTFVVSAGGMAYIDR.

Belongs to the UPF0114 family.

It localises to the cell membrane. The polypeptide is UPF0114 protein in repA1-repA2 intergenic region (Buchnera aphidicola subsp. Tetraneura caerulescens).